A 372-amino-acid chain; its full sequence is Delta-type opioid receptor (372 aa).

At Met-1–Ala-47 the chain is on the extracellular side. Asn-18 and Asn-33 each carry an N-linked (GlcNAc...) asparagine glycan. Residues Leu-48–Val-75 traverse the membrane as a helical segment. At Arg-76–Asn-85 the chain is on the cytoplasmic side. The helical transmembrane segment at Ile-86–Leu-110 threads the bilayer. At Met-111–Lys-122 the chain is on the extracellular side. Cys-121 and Cys-198 are joined by a disulfide. A helical transmembrane segment spans residues Ala-123–Val-144. At Asp-145–Ala-163 the chain is on the cytoplasmic side. The chain crosses the membrane as a helical span at residues Lys-164–Met-186. Residues Ala-187–Ser-206 lie on the Extracellular side of the membrane. A helical membrane pass occupies residues Trp-207–Leu-238. At Arg-239–Arg-261 the chain is on the cytoplasmic side. The chain crosses the membrane as a helical span at residues Met-262–Trp-284. The Extracellular portion of the chain corresponds to Thr-285–Ala-299. The chain crosses the membrane as a helical span at residues Leu-300–Leu-321. The Cytoplasmic segment spans residues Asp-322 to Ala-372. Residue Cys-333 is the site of S-palmitoyl cysteine attachment. The segment at Gln-340–Ala-372 is disordered.

This sequence belongs to the G-protein coupled receptor 1 family. May form homooligomers. Forms a heterodimer with OPRM1. Interacts with GPRASP1. Interacts with RTP4; the interaction promotes cell surface localization of the OPRD1-OPRM1 heterodimer. Ubiquitinated. A basal ubiquitination seems not to be related to degradation. Ubiquitination is increased upon formation of OPRM1:OPRD1 oligomers leading to proteasomal degradation; the ubiquitination is diminished by RTP4. As to expression, brain, with high concentrations in the basal ganglia and limbic regions.

The protein resides in the cell membrane. In terms of biological role, G-protein coupled receptor that functions as a receptor for endogenous enkephalins and for a subset of other opioids. Ligand binding causes a conformation change that triggers signaling via guanine nucleotide-binding proteins (G proteins) and modulates the activity of down-stream effectors, such as adenylate cyclase. Signaling leads to the inhibition of adenylate cyclase activity. Inhibits neurotransmitter release by reducing calcium ion currents and increasing potassium ion conductance. Plays a role in the perception of pain and in opiate-mediated analgesia. Plays a role in developing analgesic tolerance to morphine. The protein is Delta-type opioid receptor (Oprd1) of Mus musculus (Mouse).